The primary structure comprises 464 residues: ERO1-like protein alpha (464 aa).

A signal peptide spans 1 to 23 (MGRGWGLLVGLLGVVWLLRSGQG). 8 disulfide bridges follow: cysteine 35/cysteine 48, cysteine 37/cysteine 46, cysteine 85/cysteine 387, cysteine 94/cysteine 99, cysteine 94/cysteine 130, cysteine 99/cysteine 104, cysteine 207/cysteine 237, and cysteine 390/cysteine 393. A phosphoserine mark is found at serine 106, serine 142, and serine 144. FAD is bound by residues arginine 186, threonine 188, and tryptophan 199. Residues serine 248 and histidine 251 each coordinate FAD. N-linked (GlcNAc...) asparagine glycosylation occurs at asparagine 276. The FAD site is built by arginine 283 and arginine 296. A glycan (N-linked (GlcNAc...) asparagine) is linked at asparagine 380.

This sequence belongs to the EROs family. In terms of assembly, predominantly monomer. May function both as a monomer and a homodimer. Interacts with PDILT. Interacts with ERP44; the interaction results in retention of ERO1A in the endoplasmic reticulum. FAD serves as cofactor. In terms of processing, N-glycosylated. Post-translationally, the Cys-94/Cys-99 and Cys-390/Cys-393 disulfide bonds constitute the redox-active center. The Cys-94/Cys-99 disulfide bond may accept electron from P4HB and funnel them to the active site disulfide Cys-390/Cys-393. The regulatory Cys-99/Cys-104 disulfide bond stabilizes the other regulatory bond Cys-94/Cys-130. Phosphorylated on Ser-144 by FAM20C in the Golgi which increases its enzymatic activity. Phosphorylation is induced by lactation. It is also induced by hypoxia and reductive stress.

It is found in the endoplasmic reticulum membrane. The protein localises to the golgi apparatus lumen. It localises to the secreted. Its subcellular location is the cell projection. The protein resides in the dendrite. With respect to regulation, enzyme activity is tightly regulated to prevent the accumulation of reactive oxygen species in the endoplasmic reticulum. Reversibly down-regulated by the formation of disulfide bonds between the active site Cys-94 and Cys-130, and between Cys-99 and Cys-104. Glutathione may be required to regulate its activity in the endoplasmic reticulum. In terms of biological role, oxidoreductase involved in disulfide bond formation in the endoplasmic reticulum. Efficiently reoxidizes P4HB/PDI, the enzyme catalyzing protein disulfide formation, in order to allow P4HB to sustain additional rounds of disulfide formation. Following P4HB reoxidation, passes its electrons to molecular oxygen via FAD, leading to the production of reactive oxygen species (ROS) in the cell. Required for the proper folding of immunoglobulins. Plays an important role in ER stress-induced, CHOP-dependent apoptosis by activating the inositol 1,4,5-trisphosphate receptor IP3R1. This Rattus norvegicus (Rat) protein is ERO1-like protein alpha.